We begin with the raw amino-acid sequence, 293 residues long: Ribosomal protein L11 methyltransferase (293 aa).

Thr-145, Gly-166, Asp-188, and Asn-230 together coordinate S-adenosyl-L-methionine.

Belongs to the methyltransferase superfamily. PrmA family.

Its subcellular location is the cytoplasm. The enzyme catalyses L-lysyl-[protein] + 3 S-adenosyl-L-methionine = N(6),N(6),N(6)-trimethyl-L-lysyl-[protein] + 3 S-adenosyl-L-homocysteine + 3 H(+). Its function is as follows. Methylates ribosomal protein L11. In Escherichia coli (strain SMS-3-5 / SECEC), this protein is Ribosomal protein L11 methyltransferase.